The primary structure comprises 144 residues: Ribosomal RNA large subunit methyltransferase H (144 aa).

S-adenosyl-L-methionine-binding positions include G92 and 111–116; that span reads LSPMTF.

This sequence belongs to the RNA methyltransferase RlmH family. Homodimer.

Its subcellular location is the cytoplasm. It catalyses the reaction pseudouridine(1915) in 23S rRNA + S-adenosyl-L-methionine = N(3)-methylpseudouridine(1915) in 23S rRNA + S-adenosyl-L-homocysteine + H(+). In terms of biological role, specifically methylates the pseudouridine at position 1915 (m3Psi1915) in 23S rRNA. This is Ribosomal RNA large subunit methyltransferase H from Synechococcus sp. (strain CC9311).